The chain runs to 442 residues: tRNA modification GTPase MnmE (442 aa).

(6S)-5-formyl-5,6,7,8-tetrahydrofolate is bound by residues Arg22, Glu79, and Lys119. A TrmE-type G domain is found at 216 to 366; the sequence is GIKTCLVGAP…LLEKIKSIFA (151 aa). Asn226 is a K(+) binding site. GTP contacts are provided by residues 226–231, 245–251, and 270–273; these read NSGKSS, SEIPGTT, and DTAG. Ser230 is a Mg(2+) binding site. K(+) is bound by residues Ser245, Ile247, and Thr250. Thr251 provides a ligand contact to Mg(2+). Residue Lys442 coordinates (6S)-5-formyl-5,6,7,8-tetrahydrofolate.

Belongs to the TRAFAC class TrmE-Era-EngA-EngB-Septin-like GTPase superfamily. TrmE GTPase family. In terms of assembly, homodimer. Heterotetramer of two MnmE and two MnmG subunits. The cofactor is K(+).

The protein resides in the cytoplasm. Exhibits a very high intrinsic GTPase hydrolysis rate. Involved in the addition of a carboxymethylaminomethyl (cmnm) group at the wobble position (U34) of certain tRNAs, forming tRNA-cmnm(5)s(2)U34. This is tRNA modification GTPase MnmE from Mesomycoplasma hyopneumoniae (strain 7448) (Mycoplasma hyopneumoniae).